The chain runs to 118 residues: Large ribosomal subunit protein bL20 (118 aa).

This sequence belongs to the bacterial ribosomal protein bL20 family.

Binds directly to 23S ribosomal RNA and is necessary for the in vitro assembly process of the 50S ribosomal subunit. It is not involved in the protein synthesizing functions of that subunit. The sequence is that of Large ribosomal subunit protein bL20 from Shewanella baltica (strain OS223).